The chain runs to 647 residues: tRNA 5-methylaminomethyl-2-thiouridine biosynthesis bifunctional protein MnmC (647 aa).

The interval 1–227 is tRNA (mnm(5)s(2)U34)-methyltransferase; that stretch reads MLTWKNNLTP…KREMLIGSYS (227 aa). An FAD-dependent cmnm(5)s(2)U34 oxidoreductase region spans residues 256 to 647; it reads VGAGIAGTTL…ARFLYRKVRK (392 aa).

The protein in the N-terminal section; belongs to the methyltransferase superfamily. tRNA (mnm(5)s(2)U34)-methyltransferase family. It in the C-terminal section; belongs to the DAO family. Requires FAD as cofactor.

It is found in the cytoplasm. It carries out the reaction 5-aminomethyl-2-thiouridine(34) in tRNA + S-adenosyl-L-methionine = 5-methylaminomethyl-2-thiouridine(34) in tRNA + S-adenosyl-L-homocysteine + H(+). Its function is as follows. Catalyzes the last two steps in the biosynthesis of 5-methylaminomethyl-2-thiouridine (mnm(5)s(2)U) at the wobble position (U34) in tRNA. Catalyzes the FAD-dependent demodification of cmnm(5)s(2)U34 to nm(5)s(2)U34, followed by the transfer of a methyl group from S-adenosyl-L-methionine to nm(5)s(2)U34, to form mnm(5)s(2)U34. The polypeptide is tRNA 5-methylaminomethyl-2-thiouridine biosynthesis bifunctional protein MnmC (Leptospira interrogans serogroup Icterohaemorrhagiae serovar Lai (strain 56601)).